A 275-amino-acid polypeptide reads, in one-letter code: 4-hydroxy-tetrahydrodipicolinate reductase (275 aa).

Residues 13–18 and 108–110 each bind NAD(+); these read GAAGKM and GTT. Residue H164 is the Proton donor/acceptor of the active site. H165 contacts (S)-2,3,4,5-tetrahydrodipicolinate. K168 serves as the catalytic Proton donor. 174-175 contributes to the (S)-2,3,4,5-tetrahydrodipicolinate binding site; the sequence is GT.

It belongs to the DapB family.

The protein resides in the cytoplasm. The enzyme catalyses (S)-2,3,4,5-tetrahydrodipicolinate + NAD(+) + H2O = (2S,4S)-4-hydroxy-2,3,4,5-tetrahydrodipicolinate + NADH + H(+). It catalyses the reaction (S)-2,3,4,5-tetrahydrodipicolinate + NADP(+) + H2O = (2S,4S)-4-hydroxy-2,3,4,5-tetrahydrodipicolinate + NADPH + H(+). The protein operates within amino-acid biosynthesis; L-lysine biosynthesis via DAP pathway; (S)-tetrahydrodipicolinate from L-aspartate: step 4/4. In terms of biological role, catalyzes the conversion of 4-hydroxy-tetrahydrodipicolinate (HTPA) to tetrahydrodipicolinate. This Acaryochloris marina (strain MBIC 11017) protein is 4-hydroxy-tetrahydrodipicolinate reductase.